Reading from the N-terminus, the 37-residue chain is Cytochrome b6-f complex subunit 5 (37 aa).

The chain crosses the membrane as a helical span at residues 5–25 (FLFGIVLGLIPITLTGLFVTA).

Belongs to the PetG family. As to quaternary structure, the 4 large subunits of the cytochrome b6-f complex are cytochrome b6, subunit IV (17 kDa polypeptide, PetD), cytochrome f and the Rieske protein, while the 4 small subunits are PetG, PetL, PetM and PetN. The complex functions as a dimer.

The protein resides in the plastid. It localises to the chloroplast thylakoid membrane. In terms of biological role, component of the cytochrome b6-f complex, which mediates electron transfer between photosystem II (PSII) and photosystem I (PSI), cyclic electron flow around PSI, and state transitions. PetG is required for either the stability or assembly of the cytochrome b6-f complex. This chain is Cytochrome b6-f complex subunit 5, found in Phalaenopsis aphrodite subsp. formosana (Moth orchid).